The chain runs to 122 residues: Crustacean hyperglycemic hormones 5 (122 aa).

Positions Met1–Ala26 are cleaved as a signal peptide. 3 cysteine pairs are disulfide-bonded: Cys55–Cys91, Cys71–Cys87, and Cys74–Cys100. Valine amide is present on Val120.

Belongs to the arthropod CHH/MIH/GIH/VIH hormone family.

It is found in the secreted. In terms of biological role, hormone found in the sinus gland of isopods and decapods which controls the blood sugar level. Has a secretagogue action over the amylase released from the midgut gland. May act as a stress hormone and may be involved in the control of molting and reproduction. This chain is Crustacean hyperglycemic hormones 5 (CHH5), found in Penaeus monodon (Giant tiger prawn).